The following is a 612-amino-acid chain: Dihydroxy-acid dehydratase (612 aa).

Asp-81 provides a ligand contact to Mg(2+). Position 122 (Cys-122) interacts with [2Fe-2S] cluster. Mg(2+) is bound by residues Asp-123 and Lys-124. Lys-124 is modified (N6-carboxylysine). Cys-195 is a binding site for [2Fe-2S] cluster. A Mg(2+)-binding site is contributed by Glu-491. Ser-517 acts as the Proton acceptor in catalysis.

The protein belongs to the IlvD/Edd family. Homodimer. [2Fe-2S] cluster serves as cofactor. Requires Mg(2+) as cofactor.

The enzyme catalyses (2R)-2,3-dihydroxy-3-methylbutanoate = 3-methyl-2-oxobutanoate + H2O. The catalysed reaction is (2R,3R)-2,3-dihydroxy-3-methylpentanoate = (S)-3-methyl-2-oxopentanoate + H2O. It functions in the pathway amino-acid biosynthesis; L-isoleucine biosynthesis; L-isoleucine from 2-oxobutanoate: step 3/4. Its pathway is amino-acid biosynthesis; L-valine biosynthesis; L-valine from pyruvate: step 3/4. Its function is as follows. Functions in the biosynthesis of branched-chain amino acids. Catalyzes the dehydration of (2R,3R)-2,3-dihydroxy-3-methylpentanoate (2,3-dihydroxy-3-methylvalerate) into 2-oxo-3-methylpentanoate (2-oxo-3-methylvalerate) and of (2R)-2,3-dihydroxy-3-methylbutanoate (2,3-dihydroxyisovalerate) into 2-oxo-3-methylbutanoate (2-oxoisovalerate), the penultimate precursor to L-isoleucine and L-valine, respectively. This is Dihydroxy-acid dehydratase from Haemophilus influenzae (strain 86-028NP).